Consider the following 210-residue polypeptide: MKNYFDSPFKGELLSEQVKNPNIKVGRYSYYSGYYHGHSFDECARYLHPDRDDVDKLIIGSFCSIGSGASFIMAGNQGHRHDWASSFPFFYMQEEPAFSSALDAFQRAGDTAIGNDVWIGSEAMIMPGIKIGDGAVIGSRSLVTKDVVPYAIIGGSPAKQIKKRFSDEEISLLMEMEWWNWPLDKIKTAMPLLCSSNIFGLHKYWREFVV.

Residue histidine 79 is part of the active site.

This sequence belongs to the transferase hexapeptide repeat family.

The enzyme catalyses chloramphenicol + acetyl-CoA = chloramphenicol 3-acetate + CoA. This enzyme is an effector of chloramphenicol resistance in bacteria. The protein is Chloramphenicol acetyltransferase (cat) of Morganella morganii (Proteus morganii).